The following is a 589-amino-acid chain: Guanylate-binding protein 2 (589 aa).

The tract at residues 1–309 is GTPase domain (Globular); the sequence is MASEIHMLQP…GAISSGSLPC (309 aa). The region spanning 35–276 is the GB1/RHD3-type G domain; it reads NQPVVVVAIV…FTSYIFSYSA (242 aa). GTP contacts are provided by residues 45 to 52, 181 to 182, and leucine 245; these read GLYRTGKS and RD. Cysteine 586 is subject to Cysteine methyl ester. Cysteine 586 is lipidated: S-geranylgeranyl cysteine. Positions 587–589 are cleaved as a propeptide — removed in mature form; sequence TIL.

The protein belongs to the TRAFAC class dynamin-like GTPase superfamily. GB1/RHD3 GTPase family. GB1 subfamily. As to quaternary structure, homodimer; homodimerization occurs upon GTP-binding and is required for the association with membranous structures. Heterodimer with other family members, including GBP1, GBP3, GBP4 and GBP5. Isoprenylation is required for proper subcellular location. As to expression, widely expressed.

The protein resides in the cytoplasmic vesicle membrane. It localises to the golgi apparatus membrane. The protein localises to the cytoplasm. Its subcellular location is the perinuclear region. It carries out the reaction GTP + H2O = GDP + phosphate + H(+). Its function is as follows. Interferon (IFN)-inducible GTPase that plays important roles in innate immunity against a diverse range of bacterial, viral and protozoan pathogens. Hydrolyzes GTP to GMP in 2 consecutive cleavage reactions, but the major reaction product is GDP. Following infection, recruited to the pathogen-containing vacuoles or vacuole-escaped bacteria and acts as a positive regulator of inflammasome assembly by promoting the release of inflammasome ligands from bacteria. Acts by promoting lysis of pathogen-containing vacuoles, releasing pathogens into the cytosol. Following pathogen release in the cytosol, promotes recruitment of proteins that mediate bacterial cytolysis: this liberates ligands that are detected by inflammasomes, such as lipopolysaccharide (LPS) that activates the non-canonical CASP4/CASP11 inflammasome or double-stranded DNA (dsDNA) that activates the AIM2 inflammasome. Confers protection to the protozoan pathogen Toxoplasma gondii. Independently of its GTPase activity, acts as an inhibitor of various viruses infectivity by inhibiting FURIN-mediated maturation of viral envelope proteins. This chain is Guanylate-binding protein 2 (Gbp2), found in Rattus norvegicus (Rat).